We begin with the raw amino-acid sequence, 313 residues long: ADP-L-glycero-D-manno-heptose-6-epimerase (313 aa).

Residues 10 to 11 (MI), 31 to 32 (DN), K38, K53, 75 to 79 (EGACS), and N92 each bind NADP(+). The Proton acceptor role is filled by Y139. Residue K143 coordinates NADP(+). N174 serves as a coordination point for substrate. V175 and K183 together coordinate NADP(+). The active-site Proton acceptor is the K183. Substrate-binding positions include S185, H192, 206-209 (FEGS), R214, and Y277.

The protein belongs to the NAD(P)-dependent epimerase/dehydratase family. HldD subfamily. Homopentamer. The cofactor is NADP(+).

The enzyme catalyses ADP-D-glycero-beta-D-manno-heptose = ADP-L-glycero-beta-D-manno-heptose. It participates in nucleotide-sugar biosynthesis; ADP-L-glycero-beta-D-manno-heptose biosynthesis; ADP-L-glycero-beta-D-manno-heptose from D-glycero-beta-D-manno-heptose 7-phosphate: step 4/4. Catalyzes the interconversion between ADP-D-glycero-beta-D-manno-heptose and ADP-L-glycero-beta-D-manno-heptose via an epimerization at carbon 6 of the heptose. The sequence is that of ADP-L-glycero-D-manno-heptose-6-epimerase from Aliivibrio fischeri (strain MJ11) (Vibrio fischeri).